Here is a 1011-residue protein sequence, read N- to C-terminus: CRM-domain containing factor CFM2, chloroplastic (1011 aa).

The transit peptide at 1–45 (MLLPLFHQQPLILAKTFPDRIFPPFLVPNTLVSRRNVSRANSGIF) directs the protein to the chloroplast. Residues 77–90 (HDSPTRRITGEESG) are compositionally biased toward basic and acidic residues. Positions 77-96 (HDSPTRRITGEESGKNSPGE) are disordered. CRM domains lie at 164 to 260 (LTLP…YFVS), 376 to 473 (PKLT…AVSS), and 577 to 677 (EGIT…QCLR). Disordered regions lie at residues 721–810 (DSAT…GNSL) and 841–872 (LNAN…DGLV). Polar residues predominate over residues 722-736 (SATNETWSDGESSNM). The span at 743 to 757 (ENQHTEPEKAREKIE) shows a compositional bias: basic and acidic residues. Residues 762–771 (SDLSVPSSGE) show a composition bias toward polar residues. Over residues 772-782 (ENWEDDSEGEV) the composition is skewed to acidic residues. Residues 849-859 (GSSTGSGSQIS) are compositionally biased toward polar residues. A CRM 4 domain is found at 873–972 (TDLSNRERLI…WGAEEEMKSF (100 aa)).

In terms of assembly, interacts with RNA. Part of large ribonucleo-protein particles that contain CAF1 and/or CAF2.

It is found in the plastid. The protein localises to the chloroplast stroma. Functionally, binds specific group II introns in chloroplasts and facilitates their splicing. Acts on both subgroup IIA and subgroup IIB introns. The substrates of the subgroup IIB also require the CRM domain proteins CAF1 or CAF2, with a simultaneous binding of CFM2 and CAF1 or CAF2. Can bind to and promote the splicing of the single group I intron in chloroplast tRNA transcript of trnL-UAA gene. This chain is CRM-domain containing factor CFM2, chloroplastic, found in Arabidopsis thaliana (Mouse-ear cress).